Consider the following 347-residue polypeptide: NADH-ubiquinone oxidoreductase chain 2 (347 aa).

The next 11 membrane-spanning stretches (helical) occupy residues 3-23 (PMIL…VMMS), 25-45 (HWFL…PVLM), 59-79 (YFLT…INLI), 96-116 (TLLT…FWVP), 122-142 (VSLN…LSLL), 149-169 (VNTN…GWGG), 178-198 (IMAY…IYNP), 201-221 (SLLN…LLMF), 239-259 (IITT…PLSG), 274-294 (DSVI…FFYM), and 326-346 (MTSL…AMIL).

It belongs to the complex I subunit 2 family. Core subunit of respiratory chain NADH dehydrogenase (Complex I) which is composed of 45 different subunits. Interacts with TMEM242.

The protein localises to the mitochondrion inner membrane. The catalysed reaction is a ubiquinone + NADH + 5 H(+)(in) = a ubiquinol + NAD(+) + 4 H(+)(out). Its function is as follows. Core subunit of the mitochondrial membrane respiratory chain NADH dehydrogenase (Complex I) which catalyzes electron transfer from NADH through the respiratory chain, using ubiquinone as an electron acceptor. Essential for the catalytic activity and assembly of complex I. This chain is NADH-ubiquinone oxidoreductase chain 2, found in Sylvisorex johnstoni (Johnston's forest shrew).